Reading from the N-terminus, the 318-residue chain is Cytosolic Fe-S cluster assembly factor Nubp1 homolog (318 aa).

The span at 1–15 (MSAPEVENKPADAPE) shows a compositional bias: basic and acidic residues. The interval 1–29 (MSAPEVENKPADAPEHCPGTESENAGKAS) is disordered. Residues Cys17, Cys31, Cys34, and Cys40 each coordinate [4Fe-4S] cluster. 70-77 (GKGGVGKS) contributes to the ATP binding site. Cys245 and Cys248 together coordinate [4Fe-4S] cluster.

This sequence belongs to the Mrp/NBP35 ATP-binding proteins family. NUBP1/NBP35 subfamily. In terms of assembly, heterotetramer of 2 Nubp1 and 2 Nubp2 chains. The cofactor is [4Fe-4S] cluster.

The protein resides in the cytoplasm. Functionally, component of the cytosolic iron-sulfur (Fe/S) protein assembly (CIA) machinery. Required for maturation of extramitochondrial Fe-S proteins. The Nubp1-Nubp2 heterotetramer forms a Fe-S scaffold complex, mediating the de novo assembly of an Fe-S cluster and its transfer to target apoproteins. In Aedes aegypti (Yellowfever mosquito), this protein is Cytosolic Fe-S cluster assembly factor Nubp1 homolog.